The following is a 619-amino-acid chain: Sorting nexin-41 (619 aa).

The tract at residues 1-95 (MWNDEDNNPY…ELVPRRKPGG (95 aa)) is disordered. The 117-residue stretch at 108–224 (PELPILITEA…WRFLDPNSSW (117 aa)) folds into the PX domain. 4 residues coordinate a 1,2-diacyl-sn-glycero-3-phospho-(1D-myo-inositol-3-phosphate): R142, S144, K168, and R191. Positions 444–510 (YLSSSQQIQP…GSPSHKKAAS (67 aa)) are disordered. Over residues 454–467 (PRREPPAQHRRDGS) the composition is skewed to basic and acidic residues.

This sequence belongs to the sorting nexin family.

It localises to the endosome membrane. The protein localises to the endomembrane system. May be required for cytoplasm to vacuole transport (Cvt) and pexophagy. In Neurospora crassa (strain ATCC 24698 / 74-OR23-1A / CBS 708.71 / DSM 1257 / FGSC 987), this protein is Sorting nexin-41 (vsp-6).